Reading from the N-terminus, the 397-residue chain is Elongation factor Tu (397 aa).

Residues 10-206 (KPHVNVGTIG…TMDTYFPQPE (197 aa)) enclose the tr-type G domain. A G1 region spans residues 19–26 (GHVDHGKT). 19–26 (GHVDHGKT) is a GTP binding site. A Mg(2+)-binding site is contributed by T26. The interval 60 to 64 (GITIA) is G2. A G3 region spans residues 81 to 84 (DCPG). GTP is bound by residues 81–85 (DCPGH) and 136–139 (NKAD). The segment at 136 to 139 (NKAD) is G4. The tract at residues 174-176 (SAL) is G5.

It belongs to the TRAFAC class translation factor GTPase superfamily. Classic translation factor GTPase family. EF-Tu/EF-1A subfamily. In terms of assembly, monomer.

The protein localises to the cytoplasm. The catalysed reaction is GTP + H2O = GDP + phosphate + H(+). Functionally, GTP hydrolase that promotes the GTP-dependent binding of aminoacyl-tRNA to the A-site of ribosomes during protein biosynthesis. This chain is Elongation factor Tu, found in Coxiella burnetii (strain Dugway 5J108-111).